A 261-amino-acid polypeptide reads, in one-letter code: Acidic leucine-rich nuclear phosphoprotein 32 family member B (261 aa).

LRR repeat units lie at residues 16-40 (PAAV…LTAE), 43-64 (NLEF…PKLP), 65-87 (KLKK…AEKL), and 89-110 (NLTH…EPLK). K86 carries the N6-acetyllysine modification. The LRRCT domain occupies 123 to 161 (CEVTNLNDYRESVFKLLPQLTYLDGYDREDREAPDSDAE). Positions 149–261 (DREDREAPDS…RETDDEGEDD (113 aa)) are disordered. The segment covering 157-243 (DSDAEVDGVD…DEDEDEEEEE (87 aa)) has biased composition (acidic residues). The residue at position 158 (S158) is a Phosphoserine. The span at 244–254 (SGKGEKRKRET) shows a compositional bias: basic and acidic residues. The Nuclear localization signal motif lies at 249-252 (KRKR). Phosphothreonine is present on T254.

It belongs to the ANP32 family. As to quaternary structure, interacts with histones H3 and H4. Interacts with KLF5; this interaction induces promoter region-specific histone incorporation and inhibition of histone acetylation by ANP32B. Post-translationally, some Glu residues are glycylated by TTLL8; a modification that generates a side chains of glycine on the gamma-carboxyl groups of specific glutamate residues. In terms of processing, directly cleaved by caspase-3/CASP3.

Its subcellular location is the nucleus. Its function is as follows. Multifunctional protein that is involved in the regulation of many processes including cell proliferation, apoptosis, cell cycle progression or transcription. Regulates the proliferation of neuronal stem cells, differentiation of leukemic cells and progression from G1 to S phase of the cell cycle. As negative regulator of caspase-3-dependent apoptosis, may act as an antagonist of ANP32A in regulating tissue homeostasis. Exhibits histone chaperone properties, able to recruit histones to certain promoters, thus regulating the transcription of specific genes. Also plays an essential role in the nucleocytoplasmic transport of specific mRNAs via the uncommon nuclear mRNA export receptor XPO1/CRM1. Participates in the regulation of adequate adaptive immune responses by acting on mRNA expression and cell proliferation. This is Acidic leucine-rich nuclear phosphoprotein 32 family member B (ANP32B) from Bos taurus (Bovine).